The sequence spans 217 residues: Small ribosomal subunit protein uS2 (217 aa).

It belongs to the universal ribosomal protein uS2 family.

The sequence is that of Small ribosomal subunit protein uS2 from Korarchaeum cryptofilum (strain OPF8).